We begin with the raw amino-acid sequence, 679 residues long: Methionine--tRNA ligase (679 aa).

Residues C147, C150, C160, and C163 each coordinate Zn(2+). Residues 332 to 336 carry the 'KMSKS' region motif; the sequence is KISTS. T335 provides a ligand contact to ATP. Residues 578-679 enclose the tRNA-binding domain; sequence DFMKLDIRVG…REVKPGSEVK (102 aa).

The protein belongs to the class-I aminoacyl-tRNA synthetase family. MetG type 1 subfamily. Homodimer. Zn(2+) serves as cofactor.

It is found in the cytoplasm. The enzyme catalyses tRNA(Met) + L-methionine + ATP = L-methionyl-tRNA(Met) + AMP + diphosphate. Its function is as follows. Is required not only for elongation of protein synthesis but also for the initiation of all mRNA translation through initiator tRNA(fMet) aminoacylation. This chain is Methionine--tRNA ligase, found in Bacteroides fragilis (strain YCH46).